The primary structure comprises 122 residues: Small ribosomal subunit protein uS13 (122 aa).

The disordered stretch occupies residues 93–122 (RRGLPVRGQKTKTNARTRKGPKKTIANKKK).

This sequence belongs to the universal ribosomal protein uS13 family. In terms of assembly, part of the 30S ribosomal subunit. Forms a loose heterodimer with protein S19. Forms two bridges to the 50S subunit in the 70S ribosome.

Located at the top of the head of the 30S subunit, it contacts several helices of the 16S rRNA. In the 70S ribosome it contacts the 23S rRNA (bridge B1a) and protein L5 of the 50S subunit (bridge B1b), connecting the 2 subunits; these bridges are implicated in subunit movement. Contacts the tRNAs in the A and P-sites. The chain is Small ribosomal subunit protein uS13 from Clostridium beijerinckii (strain ATCC 51743 / NCIMB 8052) (Clostridium acetobutylicum).